Reading from the N-terminus, the 456-residue chain is UPF0496 protein 4 (456 aa).

A helical membrane pass occupies residues 195–217; sequence VLMRALYGIESVTVFVCSIFVAV. Residues 368-390 form a disordered region; that stretch reads QDSNVKQANGSSDESALVVPERT. Residues 371–381 show a composition bias toward polar residues; that stretch reads NVKQANGSSDE.

The protein belongs to the ROH1 family.

It localises to the membrane. The sequence is that of UPF0496 protein 4 from Oryza sativa subsp. japonica (Rice).